A 329-amino-acid polypeptide reads, in one-letter code: Phytochromobilin:ferredoxin oxidoreductase, chloroplastic (329 aa).

Residues 1–45 (MALSMEFGFSIGSCFKAPNPPVLISASPNKINFTLRRRKKRFLLR) constitute a chloroplast transit peptide.

This sequence belongs to the HY2 family.

The protein resides in the plastid. It is found in the chloroplast. It catalyses the reaction (3Z)-phytochromobilin + 2 oxidized [2Fe-2S]-[ferredoxin] = biliverdin IXalpha + 2 reduced [2Fe-2S]-[ferredoxin] + 2 H(+). Its function is as follows. Catalyzes the two-electron reduction of biliverdin IX-alpha to the tetrapyrrole chromophore phytochromobilin (PPhiB). This Arabidopsis thaliana (Mouse-ear cress) protein is Phytochromobilin:ferredoxin oxidoreductase, chloroplastic.